A 219-amino-acid chain; its full sequence is Large ribosomal subunit protein uL3 (219 aa).

The interval 113 to 142 is disordered; that stretch reads TTKGHGYQGNIHKDNQSRGPMAHGSRYHRR.

Belongs to the universal ribosomal protein uL3 family. In terms of assembly, part of the 50S ribosomal subunit. Forms a cluster with proteins L14 and L19.

Functionally, one of the primary rRNA binding proteins, it binds directly near the 3'-end of the 23S rRNA, where it nucleates assembly of the 50S subunit. This is Large ribosomal subunit protein uL3 from Limosilactobacillus reuteri (strain DSM 20016) (Lactobacillus reuteri).